A 453-amino-acid chain; its full sequence is MKFSAVILAAGKGTRMYSNMPKVLHTLAGKPMAKHVIDTCTGLGAQNIHLVYGHGGDQMQQTLAEEPVNWVLQAEQLGTGHAVDQASPKFEDDEKVLVLYGDVPLISAETIENLLDAQPTGGIALLTVMLDNPMGYGRIIRKNGPVVAIVEQKEATEEQKLIKECNTGVLVATGGDLKRWLAGLNNENAQGEYYLTDVIAAAHDEGRAVEAVHPVNAIEVEGVNDRAQLARLERAFQSMQAQKLLEQGVMLRDPARFDLRGELQCGMDCEIDANVVIEGKVSLGDNVVIGAGCVLKDCEIDDNTVVRPYSVIEGATVGEECTVGPFTRLRPGAEMRNDSHVGNFVEVKNACIGEGSKANHLTYLGDAEIGQRTNIGAGTITCNYDGANKFKTVIGNDVFVGSDSQLVAPVTIADGATIGAGTTLTKDVAEGELVITRVKERKITGWQRPVKQK.

The tract at residues 1-226 (MKFSAVILAA…AIEVEGVNDR (226 aa)) is pyrophosphorylase. Residues 8–11 (LAAG), Lys22, Gln73, 78–79 (GT), 100–102 (YGD), Gly137, Glu151, Asn166, and Asn224 each bind UDP-N-acetyl-alpha-D-glucosamine. Asp102 contributes to the Mg(2+) binding site. Asn224 is a Mg(2+) binding site. Residues 227–247 (AQLARLERAFQSMQAQKLLEQ) form a linker region. The N-acetyltransferase stretch occupies residues 248–453 (GVMLRDPARF…TGWQRPVKQK (206 aa)). Positions 330 and 348 each coordinate UDP-N-acetyl-alpha-D-glucosamine. Catalysis depends on His360, which acts as the Proton acceptor. Tyr363 and Asn374 together coordinate UDP-N-acetyl-alpha-D-glucosamine. Residues Ala377, 383–384 (NY), Ser402, Ala420, and Arg437 contribute to the acetyl-CoA site.

The protein in the N-terminal section; belongs to the N-acetylglucosamine-1-phosphate uridyltransferase family. This sequence in the C-terminal section; belongs to the transferase hexapeptide repeat family. Homotrimer. Mg(2+) is required as a cofactor.

It is found in the cytoplasm. The enzyme catalyses alpha-D-glucosamine 1-phosphate + acetyl-CoA = N-acetyl-alpha-D-glucosamine 1-phosphate + CoA + H(+). The catalysed reaction is N-acetyl-alpha-D-glucosamine 1-phosphate + UTP + H(+) = UDP-N-acetyl-alpha-D-glucosamine + diphosphate. The protein operates within nucleotide-sugar biosynthesis; UDP-N-acetyl-alpha-D-glucosamine biosynthesis; N-acetyl-alpha-D-glucosamine 1-phosphate from alpha-D-glucosamine 6-phosphate (route II): step 2/2. It functions in the pathway nucleotide-sugar biosynthesis; UDP-N-acetyl-alpha-D-glucosamine biosynthesis; UDP-N-acetyl-alpha-D-glucosamine from N-acetyl-alpha-D-glucosamine 1-phosphate: step 1/1. It participates in bacterial outer membrane biogenesis; LPS lipid A biosynthesis. Catalyzes the last two sequential reactions in the de novo biosynthetic pathway for UDP-N-acetylglucosamine (UDP-GlcNAc). The C-terminal domain catalyzes the transfer of acetyl group from acetyl coenzyme A to glucosamine-1-phosphate (GlcN-1-P) to produce N-acetylglucosamine-1-phosphate (GlcNAc-1-P), which is converted into UDP-GlcNAc by the transfer of uridine 5-monophosphate (from uridine 5-triphosphate), a reaction catalyzed by the N-terminal domain. The sequence is that of Bifunctional protein GlmU from Vibrio campbellii (strain ATCC BAA-1116).